Reading from the N-terminus, the 169-residue chain is Interleukin-36 gamma (169 aa).

A propeptide spanning residues 1-17 (MRGTPGDADGGGRAVYQ) is cleaved from the precursor.

It belongs to the IL-1 family. In terms of assembly, interacts with cargo receptor TMED10; the interaction mediates the translocation from the cytoplasm into the ERGIC (endoplasmic reticulum-Golgi intermediate compartment) and thereby secretion. In terms of processing, N-terminal truncation leads to a dramatic enhancement of its activity (&gt;1000-fold). Proteolytically cleaved by cathepsin CTSG. As to expression, highly expressed in tissues containing epithelial cells: skin, lung, stomach and esophagus. Expressed in bronchial epithelial. In skin is expressed only in keratinocytes but not in fibroblasts, endothelial cells or melanocytes. Up-regulated in lesional psoriasis skin. Expressed in monocyte-derived dendritic cells and M1 macrophages.

The protein resides in the cytoplasm. It localises to the secreted. Cytokine that binds to and signals through the IL1RL2/IL-36R receptor which in turn activates NF-kappa-B and MAPK signaling pathways in target cells. Part of the IL-36 signaling system that is thought to be present in epithelial barriers and to take part in local inflammatory response; similar to the IL-1 system with which it shares the coreceptor IL1RAP. Seems to be involved in skin inflammatory response by acting on keratinocytes, dendritic cells and indirectly on T-cells to drive tissue infiltration, cell maturation and cell proliferation. In cultured keratinocytes induces the expression of macrophage, T-cell, and neutrophil chemokines, such as CCL3, CCL4, CCL5, CCL2, CCL17, CCL22, CL20, CCL5, CCL2, CCL17, CCL22, CXCL8, CCL20 and CXCL1; also stimulates its own expression and that of the prototypic cutaneous pro-inflammatory parameters TNF-alpha, S100A7/psoriasin and inducible NOS. May play a role in pro-inflammatory responses during particular neutrophilic airway inflammation: activates mitogen-activated protein kinases and NF-kappa B in primary lung fibroblasts, and stimulates the expression of IL-8 and CXCL3 and Th17 chemokine CCL20 in lung fibroblasts. May be involved in the innate immune response to fungal pathogens, such as Aspergillus fumigatus. The chain is Interleukin-36 gamma from Homo sapiens (Human).